Consider the following 266-residue polypeptide: Elongation factor Ts (266 aa).

The segment at 80-83 (TDFV) is involved in Mg(2+) ion dislocation from EF-Tu.

The protein belongs to the EF-Ts family.

The protein localises to the cytoplasm. In terms of biological role, associates with the EF-Tu.GDP complex and induces the exchange of GDP to GTP. It remains bound to the aminoacyl-tRNA.EF-Tu.GTP complex up to the GTP hydrolysis stage on the ribosome. This Buchnera aphidicola subsp. Baizongia pistaciae (strain Bp) protein is Elongation factor Ts.